Consider the following 538-residue polypeptide: Aldehyde dehydrogenase family 2 member B4, mitochondrial (538 aa).

The N-terminal 38 residues, 1–38 (MAARRVSSLLSRSFSASSPLLFRSQGRNCYNGGILRRF), are a transit peptide targeting the mitochondrion. 282-287 (GSTDTG) is a binding site for NAD(+). The active-site Proton acceptor is the glutamate 305. Residue cysteine 339 is the Nucleophile of the active site.

Belongs to the aldehyde dehydrogenase family. Homotetramer.

The protein resides in the mitochondrion matrix. It carries out the reaction an aldehyde + NAD(+) + H2O = a carboxylate + NADH + 2 H(+). Functionally, possesses activity on acetaldehyde and glycolaldehyde in vitro. The chain is Aldehyde dehydrogenase family 2 member B4, mitochondrial (ALDH2B4) from Arabidopsis thaliana (Mouse-ear cress).